A 367-amino-acid polypeptide reads, in one-letter code: Protein TlpB (367 aa).

The next 5 membrane-spanning stretches (helical) occupy residues Ile15–Phe35, Ile53–Ile73, Ile83–Phe103, Ile124–Leu144, and Phe153–Ile173.

It is found in the membrane. The chain is Protein TlpB (tlpB) from Flavobacterium psychrophilum.